The primary structure comprises 368 residues: Histidinol dehydrogenase (368 aa).

Substrate is bound by residues threonine 197, glutamine 218, and histidine 221. Residues glutamine 218 and histidine 221 each coordinate Zn(2+). Catalysis depends on proton acceptor residues glutamate 276 and histidine 277. Residues histidine 277, aspartate 306, glutamate 358, and histidine 363 each coordinate substrate. Aspartate 306 contributes to the Zn(2+) binding site. Histidine 363 is a Zn(2+) binding site.

It belongs to the histidinol dehydrogenase family. Zn(2+) serves as cofactor.

The enzyme catalyses L-histidinol + 2 NAD(+) + H2O = L-histidine + 2 NADH + 3 H(+). The protein operates within amino-acid biosynthesis; L-histidine biosynthesis; L-histidine from 5-phospho-alpha-D-ribose 1-diphosphate: step 9/9. Functionally, catalyzes the sequential NAD-dependent oxidations of L-histidinol to L-histidinaldehyde and then to L-histidine. This Pyrobaculum aerophilum (strain ATCC 51768 / DSM 7523 / JCM 9630 / CIP 104966 / NBRC 100827 / IM2) protein is Histidinol dehydrogenase.